The primary structure comprises 810 residues: Soluble starch synthase 2-3, chloroplastic/amyloplastic (810 aa).

Residues 1 to 16 (MSSAVVASSTTFLVAL) constitute a chloroplast transit peptide. Disordered regions lie at residues 43 to 265 (GRAG…PIPA) and 281 to 313 (EPDA…SGPL). Over residues 63-83 (RDAGVVRRADDGENEAAVERA) the composition is skewed to basic and acidic residues. Residues 84–93 (GEDDEEEEEF) show a composition bias toward acidic residues. The span at 102 to 116 (RSRRGGVGKVLKRRG) shows a compositional bias: basic residues. Residues 129 to 148 (DAARVRGAAAPAPAPTQDAA) show a composition bias toward low complexity. Residues 281 to 310 (EPDAAEDGDDDDDWADSDASDSEIDQDDDS) show a composition bias toward acidic residues. Lys-333 contacts ADP-alpha-D-glucose.

It belongs to the glycosyltransferase 1 family. Bacterial/plant glycogen synthase subfamily. In terms of tissue distribution, expressed most exclusively in endosperm.

Its subcellular location is the plastid. It is found in the amyloplast. The protein resides in the chloroplast. It carries out the reaction [(1-&gt;4)-alpha-D-glucosyl](n) + ADP-alpha-D-glucose = [(1-&gt;4)-alpha-D-glucosyl](n+1) + ADP + H(+). It functions in the pathway glycan biosynthesis; starch biosynthesis. In terms of biological role, plays an important role during endosperm starch synthesis. Determines the type of amylopectin structure of starch grain. Synthesizes long B1 amylopectin chains by elongating short A and B1 chains, independently of the other soluble starch synthases. Barely active in japonica subspecies. This is Soluble starch synthase 2-3, chloroplastic/amyloplastic (SSII-3) from Oryza sativa subsp. indica (Rice).